Consider the following 304-residue polypeptide: Protein ML (304 aa).

Blocks host IRF3 and IRF7, thereby inhibiting IFN-beta expression and activation of host antiviral state. The protein is Protein ML of Thogoto virus (isolate SiAr 126) (Tho).